Reading from the N-terminus, the 226-residue chain is Probable chemoreceptor glutamine deamidase CheD (226 aa).

The protein belongs to the CheD family.

The catalysed reaction is L-glutaminyl-[protein] + H2O = L-glutamyl-[protein] + NH4(+). Probably deamidates glutamine residues to glutamate on methyl-accepting chemotaxis receptors (MCPs), playing an important role in chemotaxis. This is Probable chemoreceptor glutamine deamidase CheD from Bordetella avium (strain 197N).